The chain runs to 130 residues: Small ribosomal subunit protein uS9 (130 aa).

This sequence belongs to the universal ribosomal protein uS9 family.

This chain is Small ribosomal subunit protein uS9, found in Stenotrophomonas maltophilia (strain R551-3).